We begin with the raw amino-acid sequence, 437 residues long: Adenylosuccinate synthetase, organellar chromatophore (437 aa).

GTP contacts are provided by residues 12–18 (GDEGKGK) and 40–42 (GHT). Asp-13 acts as the Proton acceptor in catalysis. 2 residues coordinate Mg(2+): Asp-13 and Gly-40. Residues 13 to 16 (DEGK), 38 to 41 (NAGH), Thr-128, Arg-142, Gln-223, Thr-238, and Arg-302 contribute to the IMP site. His-41 serves as the catalytic Proton donor. 298–304 (TTTGRRR) is a substrate binding site. GTP is bound by residues Arg-304 and 330–332 (KLD).

It belongs to the adenylosuccinate synthetase family. Homodimer. Mg(2+) is required as a cofactor.

The protein resides in the plastid. Its subcellular location is the organellar chromatophore. It carries out the reaction IMP + L-aspartate + GTP = N(6)-(1,2-dicarboxyethyl)-AMP + GDP + phosphate + 2 H(+). It participates in purine metabolism; AMP biosynthesis via de novo pathway; AMP from IMP: step 1/2. Functionally, plays an important role in the de novo pathway and in the salvage pathway of purine nucleotide biosynthesis. Catalyzes the first committed step in the biosynthesis of AMP from IMP. The polypeptide is Adenylosuccinate synthetase, organellar chromatophore (Paulinella chromatophora).